The sequence spans 159 residues: MNIKIVCVGKLKEKYFKDAIAEYKKRLSRFAKVSIVQVPDEKAPEKFSAAEDERVKQIEGERILSKIKDKEYVYVTAIKGKQRSSEEFAKEIQNLATYGHSDITFVIGGSLGTSNAVNKRGDDLISFGKLTMPHQLMRVVLIEQIYRAFMINSGSPYHK.

Residues G108 and 127-132 (FGKLTM) contribute to the S-adenosyl-L-methionine site.

It belongs to the RNA methyltransferase RlmH family. Homodimer.

The protein resides in the cytoplasm. It catalyses the reaction pseudouridine(1915) in 23S rRNA + S-adenosyl-L-methionine = N(3)-methylpseudouridine(1915) in 23S rRNA + S-adenosyl-L-homocysteine + H(+). Functionally, specifically methylates the pseudouridine at position 1915 (m3Psi1915) in 23S rRNA. This is Ribosomal RNA large subunit methyltransferase H from Lactobacillus helveticus (strain DPC 4571).